Consider the following 366-residue polypeptide: RISC-loading complex subunit TARBP2 (366 aa).

3 sufficient for interaction with PRKRA regions span residues 22–105 (MLAA…EPAL), 152–234 (SPQQ…DARD), and 287–366 (LGAL…AGSK). A DRBM 1 domain is found at 30–97 (TPISLLQEYG…AEVALKHLKG (68 aa)). Residues 135-158 (PSAVPTRSSPMEVQPPVSPQQSEC) are disordered. S152 is subject to Phosphoserine. DRBM domains lie at 159 to 227 (NPVG…RVHT) and 293 to 361 (ACCS…YLKI). The sufficient for interaction with DICER1 stretch occupies residues 228–366 (VPLDARDGNE…QYLKIMAGSK (139 aa)).

Belongs to the TARBP2 family. As to quaternary structure, self-associates. Component of the RISC loading complex (RLC), or micro-RNA (miRNA) loading complex (miRLC), which is composed of DICER1, AGO2 and TARBP2. Note that the trimeric RLC/miRLC is also referred to as RISC. Interacts with EIF2AK2/PKR and inhibits its protein kinase activity. Interacts with DHX9 and PRKRA. Interacts with DICER1, AGO2, MOV10, EIF6 and RPL7A (60S ribosome subunit); they form a large RNA-induced silencing complex (RISC). Interacts with IRF7; this interaction prevents IRF7 phosphorylation and activation.

The protein resides in the cytoplasm. Its subcellular location is the perinuclear region. It is found in the nucleus. Required for formation of the RNA induced silencing complex (RISC). Component of the RISC loading complex (RLC), also known as the micro-RNA (miRNA) loading complex (miRLC), which is composed of DICER1, AGO2 and TARBP2. Within the RLC/miRLC, DICER1 and TARBP2 are required to process precursor miRNAs (pre-miRNAs) to mature miRNAs and then load them onto AGO2. AGO2 bound to the mature miRNA constitutes the minimal RISC and may subsequently dissociate from DICER1 and TARBP2. May also play a role in the production of short interfering RNAs (siRNAs) from double-stranded RNA (dsRNA) by DICER1. Binds in vitro to the PRM1 3'-UTR. Seems to act as a repressor of translation. For some pre-miRNA substrates, may also alter the choice of cleavage site by DICER1. Negatively regulates IRF7-mediated IFN-beta signaling triggered by viral infection by inhibiting the phosphorylation of IRF7 and promoting its 'Lys'-48-linked ubiquitination and degradation. This is RISC-loading complex subunit TARBP2 from Bos taurus (Bovine).